A 746-amino-acid polypeptide reads, in one-letter code: Root phototropism protein 3 (746 aa).

A disordered region spans residues 1–24 (MMWESESDGGVGVGGGGGREYGDG). Over residues 9–19 (GGVGVGGGGGR) the composition is skewed to gly residues. Residues 54–122 (SDLLVKIGDM…CYGVPVDLTA (69 aa)) form the BTB domain. One can recognise an NPH3 domain in the interval 250–605 (DWWFEDVSIL…VQVLFSEQVK (356 aa)). Positions 461–500 (EQTEGSSPSRMSPSPSQSMYADIPRGNNNNGGGGGGNNQN) are disordered. Residues 466-478 (SSPSRMSPSPSQS) are compositionally biased toward low complexity. Phosphotyrosine is present on Y546. Residues 708–746 (SKLTKMSGQESHDISSGGEQAGVDHPPPRKPRRWRNSIS) are disordered. The segment covering 735–746 (PRKPRRWRNSIS) has biased composition (basic residues).

This sequence belongs to the NPH3 family. As to quaternary structure, interacts with PKS1, PKS2, RPT2, PHOT1 and PHOT2. Subunit of a complex made of CAR6, PHOT1 and RPT3/NPH3. In terms of processing, phosphorylated in the dark. In terms of tissue distribution, expressed in hypocotyls, guard cells and mesophyll cells.

It is found in the cell membrane. It participates in protein modification; protein ubiquitination. Its function is as follows. May act as a substrate-specific adapter of an E3 ubiquitin-protein ligase complex (CUL3-RBX1-BTB) which mediates the ubiquitination and subsequent proteasomal degradation of target proteins. Signal transducer of the phototropic response and photo-induced movements. Involved in the phot1 pathway under low blue light (LBL) fluence rate and in the phot2 pathway under higher fluence rate of blue light (HBL). Necessary for root and hypocotyl phototropisms, but not for the regulation of stomata opening. Not involved in chloroplast accumulation and translocation. This chain is Root phototropism protein 3 (RPT3), found in Arabidopsis thaliana (Mouse-ear cress).